A 64-amino-acid chain; its full sequence is Putative antitoxin AF_1074 (64 aa).

This sequence belongs to the UPF0165 family.

Possibly the antitoxin component of a type II toxin-antitoxin (TA) system. This Archaeoglobus fulgidus (strain ATCC 49558 / DSM 4304 / JCM 9628 / NBRC 100126 / VC-16) protein is Putative antitoxin AF_1074.